We begin with the raw amino-acid sequence, 580 residues long: Probable inositol transporter 3 (580 aa).

The next 12 membrane-spanning stretches (helical) occupy residues 34–54, 69–89, 104–124, 127–147, 161–181, 187–207, 289–309, 316–336, 344–364, 455–475, 493–513, and 524–544; these read GIGG…LLYI, EIIV…GGWY, VLFL…VIIL, LLVG…ISEM, GLLI…FVHT, WMLG…LTLP, FVGI…AGYA, ALAL…MMFV, LMII…AVFN, FGYL…PGMG, LAGG…SETF, and GTFL…WLLV.

Belongs to the major facilitator superfamily. Sugar transporter (TC 2.A.1.1) family.

The protein localises to the membrane. Functionally, plasma membrane inositol-proton symporter. This Arabidopsis thaliana (Mouse-ear cress) protein is Probable inositol transporter 3 (INT3).